A 462-amino-acid chain; its full sequence is Gamma-glutamylethanolamide synthetase GlnA4 (462 aa).

The GS beta-grasp domain occupies 30 to 126; the sequence is GDIDTVVLAF…AVADLAWEDG (97 aa). Residues 133 to 462 enclose the GS catalytic domain; the sequence is PRQILRRQLE…WELRRSFERM (330 aa). Glu-156 and Glu-158 together coordinate Mg(2+). Position 214 (Glu-214) interacts with ATP. Mg(2+)-binding residues include Glu-219 and Glu-226. Position 270 (Gly-270) interacts with L-glutamate. Residue His-274 participates in Mg(2+) binding. 276–278 serves as a coordination point for ATP; that stretch reads HLS. Residues Arg-325 and Arg-343 each contribute to the L-glutamate site. Arg-343 and Arg-348 together coordinate ATP. Glu-359 serves as a coordination point for Mg(2+). L-glutamate is bound at residue Arg-361.

Belongs to the glutamine synthetase family. Mg(2+) is required as a cofactor.

The catalysed reaction is ethanolamine + L-glutamate + ATP = gamma-L-glutamylethanolamide + ADP + phosphate + H(+). It participates in amine and polyamine degradation; ethanolamine degradation. Its activity is regulated as follows. Very slightly decreased activity with glutamine synthetase (GS) inhibitor methionine sulfoximine (MSO). Its function is as follows. Involved in the catabolism of monoamine ethanolamine. Catalyzes the ATP-dependent gamma-glutamylation of ethanolamine. No activity with polyamines. No complementation of the L-glutamine auxotrophy of an E.coli glnA mutant. Enables survival of S.coelicolor under high local environmental ethanolamine conditions. May play a role during starvation conditions to limit intracellular ethanolamine concentration, which in excess is toxic to the cells. In Streptomyces coelicolor (strain ATCC BAA-471 / A3(2) / M145), this protein is Gamma-glutamylethanolamide synthetase GlnA4.